Here is a 321-residue protein sequence, read N- to C-terminus: UPF0026 protein MJ1312 (321 aa).

The Radical SAM core domain occupies 11-236 (RRLGKSLGIN…AIFNEIIGKN (226 aa)). 3 residues coordinate [4Fe-4S] cluster: Cys-27, Cys-31, and Cys-34.

This sequence belongs to the UPF0026 family. [4Fe-4S] cluster serves as cofactor.

This is UPF0026 protein MJ1312 from Methanocaldococcus jannaschii (strain ATCC 43067 / DSM 2661 / JAL-1 / JCM 10045 / NBRC 100440) (Methanococcus jannaschii).